The following is a 335-amino-acid chain: Tetraacyldisaccharide 4'-kinase (335 aa).

62-69 contributes to the ATP binding site; that stretch reads NVGGTGKT.

It belongs to the LpxK family.

It carries out the reaction a lipid A disaccharide + ATP = a lipid IVA + ADP + H(+). The protein operates within glycolipid biosynthesis; lipid IV(A) biosynthesis; lipid IV(A) from (3R)-3-hydroxytetradecanoyl-[acyl-carrier-protein] and UDP-N-acetyl-alpha-D-glucosamine: step 6/6. In terms of biological role, transfers the gamma-phosphate of ATP to the 4'-position of a tetraacyldisaccharide 1-phosphate intermediate (termed DS-1-P) to form tetraacyldisaccharide 1,4'-bis-phosphate (lipid IVA). This chain is Tetraacyldisaccharide 4'-kinase, found in Methylobacillus flagellatus (strain ATCC 51484 / DSM 6875 / VKM B-1610 / KT).